Reading from the N-terminus, the 251-residue chain is uncharacterized protein (251 aa).

An N-terminal signal peptide occupies residues 1–18 (MRILIILSIILCSLFARA).

The protein belongs to the MlaA family.

This is an uncharacterized protein from Rickettsia felis (strain ATCC VR-1525 / URRWXCal2) (Rickettsia azadi).